The chain runs to 251 residues: Lactose phosphotransferase system repressor (251 aa).

One can recognise an HTH deoR-type domain in the interval 3 to 58; it reads KEERLEEITKLINKRGTIRVTEVVERLKVSDMTVRRDLTELEGLGVLTRIHGGARS. The H-T-H motif DNA-binding region spans 20-39; that stretch reads IRVTEVVERLKVSDMTVRRD.

Functionally, repressor of the lactose catabolism operon. Galactose-6-phosphate is the inducer. The chain is Lactose phosphotransferase system repressor (lacR) from Streptococcus mutans serotype c (strain ATCC 700610 / UA159).